The sequence spans 100 residues: Small ribosomal subunit protein uS14 (100 aa).

The protein belongs to the universal ribosomal protein uS14 family. In terms of assembly, part of the 30S ribosomal subunit. Contacts proteins S3 and S10.

Functionally, binds 16S rRNA, required for the assembly of 30S particles and may also be responsible for determining the conformation of the 16S rRNA at the A site. The polypeptide is Small ribosomal subunit protein uS14 (Prochlorococcus marinus (strain AS9601)).